Reading from the N-terminus, the 203-residue chain is Proteasome subunit beta 2 (203 aa).

A propeptide spans 1-10 (MNLQNKILKG) (removed in mature form; by autocatalysis). Thr-11 functions as the Nucleophile in the catalytic mechanism.

This sequence belongs to the peptidase T1B family. In terms of assembly, the 20S proteasome core is composed of 14 alpha and 14 beta subunits that assemble into four stacked heptameric rings, resulting in a barrel-shaped structure. The two inner rings, each composed of seven catalytic beta subunits, are sandwiched by two outer rings, each composed of seven alpha subunits. The catalytic chamber with the active sites is on the inside of the barrel. Has a gated structure, the ends of the cylinder being occluded by the N-termini of the alpha-subunits. Is capped at one or both ends by the proteasome regulatory ATPase, PAN.

The protein localises to the cytoplasm. It catalyses the reaction Cleavage of peptide bonds with very broad specificity.. With respect to regulation, the formation of the proteasomal ATPase PAN-20S proteasome complex, via the docking of the C-termini of PAN into the intersubunit pockets in the alpha-rings, triggers opening of the gate for substrate entry. Interconversion between the open-gate and close-gate conformations leads to a dynamic regulation of the 20S proteasome proteolysis activity. Functionally, component of the proteasome core, a large protease complex with broad specificity involved in protein degradation. This Sulfolobus acidocaldarius (strain ATCC 33909 / DSM 639 / JCM 8929 / NBRC 15157 / NCIMB 11770) protein is Proteasome subunit beta 2.